The sequence spans 156 residues: Endogenous retrovirus group K member 24 Pro protein (156 aa).

Residues 21–96 (FEGLVDTGAD…IPLNLWGRDL (76 aa)) enclose the Peptidase A2 domain. Residue aspartate 26 is part of the active site. In terms of domain architecture, G-patch spans 111-156 (YSPTSQKIMTKMGYIPGKGLGKNEDGIKIPFEAKINQKREGIGYPF).

The protein belongs to the peptidase A2 family. HERV class-II K(HML-2) subfamily. In terms of assembly, active as a homodimer. Post-translationally, autoproteolytically processed at the N-terminus. Expected C-terminal autoprocessing not detected. The sequence shown is that of the processed Pro protein.

The catalysed reaction is Processing at the authentic HIV-1 PR recognition site and release of the mature p17 matrix and the p24 capsid protein, as a result of the cleavage of the -SQNY-|-PIVQ- cleavage site.. In terms of biological role, retroviral proteases have roles in processing of the primary translation products and the maturation of the viral particle. Endogenous Pro proteins may have kept, lost or modified their original function during evolution. This endogenous protein has retained most of the characteristics of retroviral proteases. This chain is Endogenous retrovirus group K member 24 Pro protein (ERVK-24), found in Homo sapiens (Human).